The primary structure comprises 82 residues: Sec-independent protein translocase protein TatA (82 aa).

A helical membrane pass occupies residues 1–21 (MGSFSIWHWLIVLLVVVMIFG). The tract at residues 39-82 (FKDGMKDGSTTDAPAASSAPAAQVTGQPANSDKSTIDVEARQKS) is disordered. Over residues 51-60 (APAASSAPAA) the composition is skewed to low complexity. A compositionally biased stretch (polar residues) spans 62 to 71 (VTGQPANSDK). The span at 72–82 (STIDVEARQKS) shows a compositional bias: basic and acidic residues.

The protein belongs to the TatA/E family. The Tat system comprises two distinct complexes: a TatABC complex, containing multiple copies of TatA, TatB and TatC subunits, and a separate TatA complex, containing only TatA subunits. Substrates initially bind to the TatABC complex, which probably triggers association of the separate TatA complex to form the active translocon.

The protein localises to the cell inner membrane. Its function is as follows. Part of the twin-arginine translocation (Tat) system that transports large folded proteins containing a characteristic twin-arginine motif in their signal peptide across membranes. TatA could form the protein-conducting channel of the Tat system. The polypeptide is Sec-independent protein translocase protein TatA (Variovorax paradoxus (strain S110)).